A 337-amino-acid chain; its full sequence is MKLKINIRPNEIIFLICIVVIFSFSYTLTYFDSPIFKEHYITNNGNDFGVENHFVTYHSTYKEDIHKRIIDPHHGLIQEITKTFYPVSSPLEKLFSFSDNILIVLIIVQVIVGFLIFLLSVEKLSKCNYQLKSIFSTKSTFYINNNNNNNNEDINNNNNNNNNNNNKNKNDERNNEEIEDEETIRKEKILIIKKKRDILLAIIIFFLVLLGVLTIIYVSFIPLNIRKAFIGQQFYYKGSIDPLCADISNEGDHHIGKCKSLNGRIGNVNDKIFGYSWSLDSGLFNVKIVFFSTILIEFLTGCLILLMKFKKDPNIVPLTKPSIASPTQIPHLFCIAK.

Residues 1-10 (MKLKINIRPN) are Cytoplasmic-facing. The chain crosses the membrane as a helical span at residues 11–31 (EIIFLICIVVIFSFSYTLTYF). Residues 32 to 100 (DSPIFKEHYI…LEKLFSFSDN (69 aa)) are Extracellular-facing. The helical transmembrane segment at 101 to 121 (ILIVLIIVQVIVGFLIFLLSV) threads the bilayer. Residues 122-197 (EKLSKCNYQL…KILIIKKKRD (76 aa)) are Cytoplasmic-facing. A compositionally biased stretch (low complexity) spans 148–167 (NNNNEDINNNNNNNNNNNNK). The tract at residues 148 to 179 (NNNNEDINNNNNNNNNNNNKNKNDERNNEEIE) is disordered. The chain crosses the membrane as a helical span at residues 198–218 (ILLAIIIFFLVLLGVLTIIYV). The Extracellular portion of the chain corresponds to 219 to 285 (SFIPLNIRKA…SWSLDSGLFN (67 aa)). Residues 286–306 (VKIVFFSTILIEFLTGCLILL) form a helical membrane-spanning segment. Residues 307–337 (MKFKKDPNIVPLTKPSIASPTQIPHLFCIAK) lie on the Cytoplasmic side of the membrane.

It is found in the membrane. This is an uncharacterized protein from Dictyostelium discoideum (Social amoeba).